We begin with the raw amino-acid sequence, 556 residues long: Arginine--tRNA ligase (556 aa).

The 'HIGH' region motif lies at 132 to 142 (ANPTGDLHLGH).

It belongs to the class-I aminoacyl-tRNA synthetase family. Monomer.

It is found in the cytoplasm. The catalysed reaction is tRNA(Arg) + L-arginine + ATP = L-arginyl-tRNA(Arg) + AMP + diphosphate. The protein is Arginine--tRNA ligase of Listeria monocytogenes serotype 4b (strain CLIP80459).